Reading from the N-terminus, the 940-residue chain is Testis-expressed protein 11 (940 aa).

The protein belongs to the SPO22 family. Interacts with SYCP2. Interacts with PBXIP1; may prevent interaction between PBXIP1 and ESR2. Interacts with SHOC1. Interacts with REDIC1. As to expression, testis-specific. Not expressed in adult ovaries.

Its subcellular location is the chromosome. Regulator of crossing-over during meiosis. Involved in initiation and/or maintenance of chromosome synapsis and formation of crossovers. This is Testis-expressed protein 11 (TEX11) from Homo sapiens (Human).